A 1104-amino-acid polypeptide reads, in one-letter code: Carbamoyl phosphate synthase large chain (1104 aa).

The carboxyphosphate synthetic domain stretch occupies residues 1-402 (MPRRTDLKSV…ALQKALRSTE (402 aa)). 12 residues coordinate ATP: Arg-129, Arg-169, Gly-175, Gly-176, Glu-208, Ile-210, Glu-215, Gly-241, Val-242, His-243, Gln-285, and Glu-299. The ATP-grasp 1 domain occupies 133–328 (KGVVERCGAE…IAKIAARLAV (196 aa)). The Mg(2+) site is built by Gln-285, Glu-299, and Asn-301. Residues Gln-285, Glu-299, and Asn-301 each coordinate Mn(2+). The tract at residues 403-547 (KRGATFSWAG…YSSYDEEDET (145 aa)) is oligomerization domain. The interval 548–948 (RPREKAAIVI…AFGKSQTAAY (401 aa)) is carbamoyl phosphate synthetic domain. The 192-residue stretch at 676–867 (GQVLERAGLV…LAKAAARLMA (192 aa)) folds into the ATP-grasp 2 domain. Positions 712, 751, 753, 758, 783, 784, 785, 786, 826, and 838 each coordinate ATP. Positions 826, 838, and 840 each coordinate Mg(2+). Mn(2+)-binding residues include Gln-826, Glu-838, and Asn-840. The region spanning 949–1099 (GGLPTAGTAF…QEHTARLNAA (151 aa)) is the MGS-like domain. The segment at 949 to 1104 (GGLPTAGTAF…RLNAAWEGRA (156 aa)) is allosteric domain.

The protein belongs to the CarB family. As to quaternary structure, composed of two chains; the small (or glutamine) chain promotes the hydrolysis of glutamine to ammonia, which is used by the large (or ammonia) chain to synthesize carbamoyl phosphate. Tetramer of heterodimers (alpha,beta)4. Mg(2+) serves as cofactor. The cofactor is Mn(2+).

The catalysed reaction is hydrogencarbonate + L-glutamine + 2 ATP + H2O = carbamoyl phosphate + L-glutamate + 2 ADP + phosphate + 2 H(+). It carries out the reaction hydrogencarbonate + NH4(+) + 2 ATP = carbamoyl phosphate + 2 ADP + phosphate + 2 H(+). The protein operates within amino-acid biosynthesis; L-arginine biosynthesis; carbamoyl phosphate from bicarbonate: step 1/1. Its pathway is pyrimidine metabolism; UMP biosynthesis via de novo pathway; (S)-dihydroorotate from bicarbonate: step 1/3. Its function is as follows. Large subunit of the glutamine-dependent carbamoyl phosphate synthetase (CPSase). CPSase catalyzes the formation of carbamoyl phosphate from the ammonia moiety of glutamine, carbonate, and phosphate donated by ATP, constituting the first step of 2 biosynthetic pathways, one leading to arginine and/or urea and the other to pyrimidine nucleotides. The large subunit (synthetase) binds the substrates ammonia (free or transferred from glutamine from the small subunit), hydrogencarbonate and ATP and carries out an ATP-coupled ligase reaction, activating hydrogencarbonate by forming carboxy phosphate which reacts with ammonia to form carbamoyl phosphate. The chain is Carbamoyl phosphate synthase large chain from Kineococcus radiotolerans (strain ATCC BAA-149 / DSM 14245 / SRS30216).